The chain runs to 331 residues: Probable cyclic nucleotide synthase IK1_05630 (331 aa).

This sequence belongs to the CD-NTase family. D12 subfamily.

Functionally, cyclic nucleotide synthase (second messenger synthase) of a CBASS antivirus system. CBASS (cyclic oligonucleotide-based antiphage signaling system) provides immunity against bacteriophage. The CD-NTase protein synthesizes cyclic nucleotides in response to infection; these serve as specific second messenger signals. The signals activate a diverse range of effectors, leading to bacterial cell death and thus abortive phage infection. A type I-B CBASS system. Probably a cyclic nucleotide synthase that makes second messenger nucleotide which activates a CBASS antiviral defense system. In terms of biological role, protects B.subtilis against phage infection. When IK1_05630 and IK1_05631 are introduced in B.subtilis BEST7003 there is 1000-fold protection against phage SBSphiC. Both genes are required for protection. Activation leads to bacterial cell lysis and death, which occurs before the phage has finished its replication cycle, thus protecting non-infected bacteria by aborting the phage infection and preventing its propagation. The sequence is that of Probable cyclic nucleotide synthase IK1_05630 from Bacillus cereus (strain VD146).